The primary structure comprises 314 residues: Probable dimethyladenosine transferase (314 aa).

Residues H36, L38, G63, E84, D112, and N127 each contribute to the S-adenosyl-L-methionine site.

The protein belongs to the class I-like SAM-binding methyltransferase superfamily. rRNA adenine N(6)-methyltransferase family. In terms of assembly, part of the small subunit (SSU) processome, composed of more than 70 proteins and the RNA chaperone small nucleolar RNA (snoRNA) U3.

The protein localises to the nucleus. It localises to the nucleoplasm. It is found in the nucleolus. The catalysed reaction is adenosine(1779)/adenosine(1780) in 18S rRNA + 4 S-adenosyl-L-methionine = N(6)-dimethyladenosine(1779)/N(6)-dimethyladenosine(1780) in 18S rRNA + 4 S-adenosyl-L-homocysteine + 4 H(+). In terms of biological role, specifically dimethylates two adjacent adenosines in the loop of a conserved hairpin near the 3'-end of 18S rRNA in the 40S particle. Involved in the pre-rRNA processing steps leading to small-subunit rRNA production independently of its RNA-modifying catalytic activity. Part of the small subunit (SSU) processome, first precursor of the small eukaryotic ribosomal subunit. During the assembly of the SSU processome in the nucleolus, many ribosome biogenesis factors, an RNA chaperone and ribosomal proteins associate with the nascent pre-rRNA and work in concert to generate RNA folding, modifications, rearrangements and cleavage as well as targeted degradation of pre-ribosomal RNA by the RNA exosome. The sequence is that of Probable dimethyladenosine transferase (dimt1) from Dictyostelium discoideum (Social amoeba).